We begin with the raw amino-acid sequence, 418 residues long: Serine hydroxymethyltransferase (418 aa).

(6S)-5,6,7,8-tetrahydrofolate-binding positions include Leu121 and 125–127 (GHL). Position 230 is an N6-(pyridoxal phosphate)lysine (Lys230). Residues Glu246 and 355–357 (SPF) each bind (6S)-5,6,7,8-tetrahydrofolate.

It belongs to the SHMT family. Homodimer. The cofactor is pyridoxal 5'-phosphate.

The protein localises to the cytoplasm. It carries out the reaction (6R)-5,10-methylene-5,6,7,8-tetrahydrofolate + glycine + H2O = (6S)-5,6,7,8-tetrahydrofolate + L-serine. Its pathway is one-carbon metabolism; tetrahydrofolate interconversion. The protein operates within amino-acid biosynthesis; glycine biosynthesis; glycine from L-serine: step 1/1. Its function is as follows. Catalyzes the reversible interconversion of serine and glycine with tetrahydrofolate (THF) serving as the one-carbon carrier. This reaction serves as the major source of one-carbon groups required for the biosynthesis of purines, thymidylate, methionine, and other important biomolecules. Also exhibits THF-independent aldolase activity toward beta-hydroxyamino acids, producing glycine and aldehydes, via a retro-aldol mechanism. The sequence is that of Serine hydroxymethyltransferase from Streptococcus pneumoniae (strain 70585).